We begin with the raw amino-acid sequence, 487 residues long: MIKIDLAQIRTTVPEMRRVKQIHFVGIGGAGMGGIAEVLAYEGYKISGSDIAENPVVRRLRSLGAEIFIGHQQDNIYGASVVVVSTAINADNPELLAAQQARIPVVRRAEMLAELMRYRHGVAVSGTHGKTTTTSLIASIYGQAQLDPTFVIGGLLNSAGTNAKLGQSRYLIAEADESDASFLHLQPMVSVVTNIEADHMDTYEGNFEVLKDTFVRFIQNLPFYGTAVVCLDDAVIEQLIPRFARQTVTYGFHEQADVRISDFSQCVNRSEFSVHRINKPAMKIQLNLPGKHNALNAAAAIAVAMEDDIDDFSISKALNEFAGIGRRFEQYGEFETGRGKAILVDDYGHHPTEVQATIDAARAAWPDKRLVMAYQPHRYTRTRDLYEDFAHVLAQVDQLLLLDVYAAGETPIAGADSRSLCRTIRQRSGKEPIFVASPEVLPAMLAQIIDDGDLVLTQGAGNIGAVVKTLAELQLNIEKMKKASRVQ.

126 to 132 (GTHGKTT) serves as a coordination point for ATP.

Belongs to the MurCDEF family.

The protein localises to the cytoplasm. The catalysed reaction is UDP-N-acetyl-alpha-D-muramate + L-alanine + ATP = UDP-N-acetyl-alpha-D-muramoyl-L-alanine + ADP + phosphate + H(+). Its pathway is cell wall biogenesis; peptidoglycan biosynthesis. Its function is as follows. Cell wall formation. In Psychromonas ingrahamii (strain DSM 17664 / CCUG 51855 / 37), this protein is UDP-N-acetylmuramate--L-alanine ligase.